The sequence spans 408 residues: Argininosuccinate synthase (408 aa).

ATP is bound by residues Ala12–Ser20 and Ala39. L-citrulline-binding residues include Tyr90 and Ser95. Gly120 lines the ATP pocket. L-aspartate contacts are provided by Thr122, Asn126, and Asp127. Asn126 contributes to the L-citrulline binding site. L-citrulline is bound by residues Arg130, Ser181, Ser190, Glu266, and Tyr278.

This sequence belongs to the argininosuccinate synthase family. Type 1 subfamily. As to quaternary structure, homotetramer.

It is found in the cytoplasm. It carries out the reaction L-citrulline + L-aspartate + ATP = 2-(N(omega)-L-arginino)succinate + AMP + diphosphate + H(+). The protein operates within amino-acid biosynthesis; L-arginine biosynthesis; L-arginine from L-ornithine and carbamoyl phosphate: step 2/3. The protein is Argininosuccinate synthase of Methylococcus capsulatus (strain ATCC 33009 / NCIMB 11132 / Bath).